A 181-amino-acid polypeptide reads, in one-letter code: MPLVRLSQLVPLLLKGKTSLAHQFVEGEFLEDYDPTVENTYSKIVTVGKDEFHLHLVDTAGQDEYSILPYSFIIGVHGYVLVYSVTSLHSFQVIESLYQKLHEGHGKTRLPVVLVGNKADLSPDREVQAVEGKKLAASWGATFMESSARNNQLTQGIFTKVIQEIARVENSYGQERRCHLM.

GTP contacts are provided by residues Leu-30 to Thr-36, Gly-61, Asn-117 to Asp-120, and Ser-147 to Ala-148. The Effector region motif lies at Tyr-33–Tyr-41. Thr-36 is a binding site for Mg(2+). Cys-178 carries the cysteine methyl ester modification. Cys-178 carries the S-farnesyl cysteine lipid modification. Residues His-179 to Met-181 constitute a propeptide, removed in mature form.

This sequence belongs to the small GTPase superfamily. Rheb family. In terms of assembly, interacts with MTOR.

It localises to the endomembrane system. The protein localises to the cytoplasm. It carries out the reaction GTP + H2O = GDP + phosphate + H(+). Its function is as follows. Binds GTP and exhibits intrinsic GTPase activity. May activate NF-kappa-B-mediated gene transcription. Promotes signal transduction through MTOR, activates RPS6KB1, and is a downstream target of the small GTPase-activating proteins TSC1 and TSC2. The chain is GTPase RhebL1 (RHEBL1) from Bos taurus (Bovine).